Here is a 116-residue protein sequence, read N- to C-terminus: S-adenosylmethionine decarboxylase proenzyme (116 aa).

The active-site Schiff-base intermediate with substrate; via pyruvic acid is the S62. Position 62 is a pyruvic acid (Ser); by autocatalysis (S62). H67 serves as the catalytic Proton acceptor; for processing activity. The active-site Proton donor; for catalytic activity is the C82.

Belongs to the prokaryotic AdoMetDC family. Type 1 subfamily. Heterotetramer of two alpha and two beta chains arranged as a dimer of alpha/beta heterodimers. The cofactor is pyruvate. In terms of processing, is synthesized initially as an inactive proenzyme. Formation of the active enzyme involves a self-maturation process in which the active site pyruvoyl group is generated from an internal serine residue via an autocatalytic post-translational modification. Two non-identical subunits are generated from the proenzyme in this reaction, and the pyruvate is formed at the N-terminus of the alpha chain, which is derived from the carboxyl end of the proenzyme. The post-translation cleavage follows an unusual pathway, termed non-hydrolytic serinolysis, in which the side chain hydroxyl group of the serine supplies its oxygen atom to form the C-terminus of the beta chain, while the remainder of the serine residue undergoes an oxidative deamination to produce ammonia and the pyruvoyl group blocking the N-terminus of the alpha chain.

The catalysed reaction is S-adenosyl-L-methionine + H(+) = S-adenosyl 3-(methylsulfanyl)propylamine + CO2. The protein operates within amine and polyamine biosynthesis; S-adenosylmethioninamine biosynthesis; S-adenosylmethioninamine from S-adenosyl-L-methionine: step 1/1. Catalyzes the decarboxylation of S-adenosylmethionine to S-adenosylmethioninamine (dcAdoMet), the propylamine donor required for the synthesis of the polyamines spermine and spermidine from the diamine putrescine. The protein is S-adenosylmethionine decarboxylase proenzyme of Thermomicrobium roseum (strain ATCC 27502 / DSM 5159 / P-2).